The following is a 291-amino-acid chain: Formamidopyrimidine-DNA glycosylase (291 aa).

Proline 2 serves as the catalytic Schiff-base intermediate with DNA. The active-site Proton donor is the glutamate 3. Residue lysine 58 is the Proton donor; for beta-elimination activity of the active site. DNA is bound by residues histidine 100, arginine 123, and lysine 166. The FPG-type zinc-finger motif lies at 257–291 (SVYGREGKECFQCGIPITRISQSGRSSFYCSQCQK). Arginine 281 acts as the Proton donor; for delta-elimination activity in catalysis.

Belongs to the FPG family. In terms of assembly, monomer. The cofactor is Zn(2+).

The catalysed reaction is Hydrolysis of DNA containing ring-opened 7-methylguanine residues, releasing 2,6-diamino-4-hydroxy-5-(N-methyl)formamidopyrimidine.. It catalyses the reaction 2'-deoxyribonucleotide-(2'-deoxyribose 5'-phosphate)-2'-deoxyribonucleotide-DNA = a 3'-end 2'-deoxyribonucleotide-(2,3-dehydro-2,3-deoxyribose 5'-phosphate)-DNA + a 5'-end 5'-phospho-2'-deoxyribonucleoside-DNA + H(+). Involved in base excision repair of DNA damaged by oxidation or by mutagenic agents. Acts as a DNA glycosylase that recognizes and removes damaged bases. Has a preference for oxidized purines, such as 7,8-dihydro-8-oxoguanine (8-oxoG). Has AP (apurinic/apyrimidinic) lyase activity and introduces nicks in the DNA strand. Cleaves the DNA backbone by beta-delta elimination to generate a single-strand break at the site of the removed base with both 3'- and 5'-phosphates. In Bartonella quintana (strain Toulouse) (Rochalimaea quintana), this protein is Formamidopyrimidine-DNA glycosylase.